Here is a 449-residue protein sequence, read N- to C-terminus: Phosphoglucosamine mutase (449 aa).

Ser104 functions as the Phosphoserine intermediate in the catalytic mechanism. Mg(2+)-binding residues include Ser104, Asp243, Asp245, and Asp247. Ser104 is modified (phosphoserine).

Belongs to the phosphohexose mutase family. It depends on Mg(2+) as a cofactor. Activated by phosphorylation.

The catalysed reaction is alpha-D-glucosamine 1-phosphate = D-glucosamine 6-phosphate. Catalyzes the conversion of glucosamine-6-phosphate to glucosamine-1-phosphate. The sequence is that of Phosphoglucosamine mutase from Xanthomonas euvesicatoria pv. vesicatoria (strain 85-10) (Xanthomonas campestris pv. vesicatoria).